The primary structure comprises 110 residues: Ribonuclease P protein component 1 (110 aa).

This sequence belongs to the eukaryotic/archaeal RNase P protein component 1 family. In terms of assembly, consists of a catalytic RNA component and at least 4-5 protein subunits.

It localises to the cytoplasm. It carries out the reaction Endonucleolytic cleavage of RNA, removing 5'-extranucleotides from tRNA precursor.. Functionally, part of ribonuclease P, a protein complex that generates mature tRNA molecules by cleaving their 5'-ends. This is Ribonuclease P protein component 1 from Methanosarcina barkeri (strain Fusaro / DSM 804).